Here is a 390-residue protein sequence, read N- to C-terminus: Acetate kinase (390 aa).

Asparagine 10 serves as a coordination point for Mg(2+). ATP is bound at residue lysine 17. Position 89 (arginine 89) interacts with substrate. Aspartate 146 acts as the Proton donor/acceptor in catalysis. Residues 204–208 (HLGNG), 278–280 (DMR), and 323–327 (GIGEN) contribute to the ATP site. Glutamate 376 lines the Mg(2+) pocket.

The protein belongs to the acetokinase family. Homodimer. Mg(2+) serves as cofactor. Mn(2+) is required as a cofactor.

Its subcellular location is the cytoplasm. The enzyme catalyses acetate + ATP = acetyl phosphate + ADP. It participates in metabolic intermediate biosynthesis; acetyl-CoA biosynthesis; acetyl-CoA from acetate: step 1/2. Functionally, catalyzes the formation of acetyl phosphate from acetate and ATP. Can also catalyze the reverse reaction. The protein is Acetate kinase of Mycoplasma pneumoniae (strain ATCC 29342 / M129 / Subtype 1) (Mycoplasmoides pneumoniae).